The chain runs to 142 residues: Nucleoside diphosphate kinase (142 aa).

Residues lysine 11, phenylalanine 59, arginine 87, threonine 93, arginine 104, and asparagine 114 each coordinate ATP. Histidine 117 (pros-phosphohistidine intermediate) is an active-site residue.

This sequence belongs to the NDK family. As to quaternary structure, homotetramer. Mg(2+) is required as a cofactor.

The protein localises to the cytoplasm. The catalysed reaction is a 2'-deoxyribonucleoside 5'-diphosphate + ATP = a 2'-deoxyribonucleoside 5'-triphosphate + ADP. It carries out the reaction a ribonucleoside 5'-diphosphate + ATP = a ribonucleoside 5'-triphosphate + ADP. Major role in the synthesis of nucleoside triphosphates other than ATP. The ATP gamma phosphate is transferred to the NDP beta phosphate via a ping-pong mechanism, using a phosphorylated active-site intermediate. The polypeptide is Nucleoside diphosphate kinase (Aeromonas salmonicida (strain A449)).